Consider the following 490-residue polypeptide: Betaine aldehyde dehydrogenase (490 aa).

K(+)-binding residues include Thr26, Ile27, and Asp93. 150–152 contacts NAD(+); sequence GAW. The Charge relay system role is filled by Lys162. 176 to 179 contributes to the NAD(+) binding site; the sequence is KPSE. K(+) is bound at residue Val180. 230 to 233 serves as a coordination point for NAD(+); that stretch reads GVAS. Leu246 contributes to the K(+) binding site. Catalysis depends on Glu252, which acts as the Proton acceptor. Residues Gly254, Cys286, and Glu387 each contribute to the NAD(+) site. The active-site Nucleophile is Cys286. At Cys286 the chain carries Cysteine sulfenic acid (-SOH). 2 residues coordinate K(+): Lys457 and Gly460. The active-site Charge relay system is Glu464.

Belongs to the aldehyde dehydrogenase family. Dimer of dimers. K(+) is required as a cofactor.

The catalysed reaction is betaine aldehyde + NAD(+) + H2O = glycine betaine + NADH + 2 H(+). Its pathway is amine and polyamine biosynthesis; betaine biosynthesis via choline pathway; betaine from betaine aldehyde: step 1/1. Its function is as follows. Involved in the biosynthesis of the osmoprotectant glycine betaine. Catalyzes the irreversible oxidation of betaine aldehyde to the corresponding acid. In Escherichia coli O6:H1 (strain CFT073 / ATCC 700928 / UPEC), this protein is Betaine aldehyde dehydrogenase.